A 482-amino-acid chain; its full sequence is Pancreatic lipase-related protein 2 (482 aa).

Positions 1-30 (MPMDVRGCLFPSVQMLLCWLVSLLLATVGG) are cleaved as a signal peptide. A disulfide bridge connects residues C34 and C40. An N-linked (GlcNAc...) asparagine glycan is attached at N92. Positions 106-118 (IHGFIDKGEEGWL) are required for galactolipase activity. C122 and C133 are oxidised to a cystine. S184 acts as the Nucleophile in catalysis. The active-site Charge relay system is the D208. Ca(2+) contacts are provided by E219, R222, D224, and D227. A disulfide bridge links C269 with C293. The interval 270–292 (QKNILSTIVDINGIWEGTRNFAA) is required for galactolipase activity. H295 serves as the catalytic Charge relay system. Cystine bridges form between C317–C328 and C331–C336. N366 and N441 each carry an N-linked (GlcNAc...) asparagine glycan. A PLAT domain is found at 370-482 (WRYKVSVTLS…EDVLQSLYPC (113 aa)). C466 and C482 form a disulfide bridge.

This sequence belongs to the AB hydrolase superfamily. Lipase family. As to expression, expressed in acinar cells of pancreas (at protein level).

The protein localises to the secreted. Its subcellular location is the zymogen granule membrane. The protein resides in the cell projection. It localises to the neuron projection. It catalyses the reaction a triacylglycerol + H2O = a diacylglycerol + a fatty acid + H(+). The catalysed reaction is a 1,2-diacyl-3-O-(beta-D-galactosyl)-sn-glycerol + 2 H2O = 3-beta-D-galactosyl-sn-glycerol + 2 a fatty acid + 2 H(+). The enzyme catalyses 1,2,3-tri-(9Z-octadecenoyl)-glycerol + H2O = di-(9Z)-octadecenoylglycerol + (9Z)-octadecenoate + H(+). It carries out the reaction di-(9Z)-octadecenoylglycerol + H2O = (9Z-octadecenoyl)-glycerol + (9Z)-octadecenoate + H(+). It catalyses the reaction (9Z-octadecenoyl)-glycerol + H2O = glycerol + (9Z)-octadecenoate + H(+). The catalysed reaction is 1-(9Z-octadecenoyl)-glycerol + H2O = glycerol + (9Z)-octadecenoate + H(+). The enzyme catalyses 1,2,3-tripropanoylglycerol + H2O = dipropanoylglycerol + propanoate + H(+). It carries out the reaction 1,2,3-tributanoylglycerol + H2O = dibutanoylglycerol + butanoate + H(+). It catalyses the reaction 1,2,3-trioctanoylglycerol + H2O = dioctanoylglycerol + octanoate + H(+). The catalysed reaction is 1,2-didecanoylglycerol + H2O = decanoylglycerol + decanoate + H(+). The enzyme catalyses long chain 1,2-diacyl-3-O-beta-D-galactosyl-sn-glycerol + H2O = long chain acyl-3-O-beta-D-galactosyl-sn-glycerol + a fatty acid + H(+). It carries out the reaction 1,2-dioctanoyl-3-O-beta-D-galactosyl-sn-glycerol + H2O = octanoyl-3-(beta-D-galactosyl)-sn-glycerol + octanoate + H(+). It catalyses the reaction 1,2-didodecanoyl-3-beta-D-galactosyl-sn-glycerol + H2O = dodecanoyl-3-beta-D-galactosyl-sn-glycerol + dodecanoate + H(+). The catalysed reaction is 1-beta-D-galactosyl-2,3-didodecanoyl-sn-glycerol + H2O = 1-beta-D-galactosyl-dodecanoyl-sn-glycerol + dodecanoate + H(+). The enzyme catalyses a 1,2-diacyl-3-O-[alpha-D-galactosyl-(1-&gt;6)-beta-D-galactosyl]-sn-glycerol + H2O = acyl-3-O-[alpha-D-galactosyl-(1-&gt;6)-beta-D-galactosyl]-sn-glycerol + a fatty acid + H(+). It carries out the reaction long chain 1,2-diacyl-3-O-[alpha-D-galactosyl-(1-&gt;6)-beta-D-galactosyl]-sn-glycerol + H2O = long chain acyl-3-O-[alpha-D-galactosyl-(1-&gt;6)-beta-D-galactosyl]-sn-glycerol + a fatty acid + H(+). It catalyses the reaction 1,2-dioctanoyl-3-O-[alpha-D-galactosyl-(1-&gt;6)-beta-D-galactosyl]-sn-glycerol + H2O = octanoyl-3-O-[alpha-D-galactosyl-(1-&gt;6)-beta-D-galactosyl]-sn-glycerol + octanoate + H(+). The catalysed reaction is 1,2-didodecanoyl-3-O-[alpha-D-galactosyl-(1-&gt;6)-beta-D-galactosyl]-sn-glycerol + H2O = dodecanoyl-3-O-[alpha-D-galactosyl-(1-&gt;6)-beta-D-galactosyl]-sn-glycerol + dodecanoate + H(+). The enzyme catalyses a 1,2-diacyl-sn-glycero-3-phosphocholine + H2O = a monoacyl-sn-glycero-3-phosphocholine + a fatty acid + H(+). The protein operates within glycerolipid metabolism; triacylglycerol degradation. It functions in the pathway glycolipid metabolism. Its activity is regulated as follows. CLPS stimulates triacylglycerol lipase activity. Triacylglycerol lipase activity is not inhibited by increasing bile salt concentration. In terms of biological role, lipase that primarily hydrolyzes triglycerides and galactosylglycerides. In neonates, may play a major role in pancreatic digestion of dietary fats such as milk fat globules enriched in long-chain triglycerides. Hydrolyzes short-, medium- and long-chain fatty acyls in triglycerides without apparent positional specificity. Can completely deacylate triacylglycerols. When the liver matures and bile salt synthesis increases, likely functions mainly as a galactolipase and monoacylglycerol lipase. Hydrolyzes monogalactosyldiglycerols (MGDG) and digalactosyldiacylglycerols (DGDG) present in a plant-based diet, releasing long-chain polyunsaturated fatty acids. Hydrolyzes medium- and long-chain fatty acyls in galactolipids. May act together with LIPF to hydrolyze partially digested triglycerides. Hydrolyzes long-chain monoglycerides with high efficiency. In cytotoxic T cells, contributes to perforin-dependent cell lysis, but is unlikely to mediate direct cytotoxicity. Also has low phospholipase activity. In neurons, required for the localization of the phospholipid 1-oleoyl-2-palmitoyl-PC (OPPC) to neurite tips through acyl chain remodeling of membrane phospholipids. The resulting OPPC-rich lipid membrane domain recruits the t-SNARE protein STX4 by selectively interacting with the STX4 transmembrane domain and this promotes surface expression of the dopamine transporter SLC6A3/DAT at neurite tips by facilitating fusion of SLC6A3-containing transport vesicles with the plasma membrane. This is Pancreatic lipase-related protein 2 from Mus musculus (Mouse).